Here is a 785-residue protein sequence, read N- to C-terminus: Putative lipase C4A8.10 (785 aa).

Disordered regions lie at residues 29 to 99 (HSAT…SSDF) and 115 to 140 (NTNA…VGTS). Residues 32–41 (TSSTTVPPTV) are compositionally biased toward low complexity. Residues 47–58 (TKKESGSIEDRA) are compositionally biased toward basic and acidic residues. Positions 63-86 (MTISSGENISKQISENNSSTNPKH) are enriched in polar residues. 2 stretches are compositionally biased toward low complexity: residues 89-99 (SESSPLLSSDF) and 127-140 (GVSH…VGTS). The active-site Charge relay system is the serine 390.

It belongs to the putative lipase ROG1 family.

The chain is Putative lipase C4A8.10 from Schizosaccharomyces pombe (strain 972 / ATCC 24843) (Fission yeast).